The primary structure comprises 327 residues: tRNA dimethylallyltransferase (327 aa).

Residue 14 to 21 (GPTASGKT) coordinates ATP. Residue 16–21 (TASGKT) participates in substrate binding. Interaction with substrate tRNA stretches follow at residues 39–42 (DSAL) and 163–167 (QRIQR).

This sequence belongs to the IPP transferase family. As to quaternary structure, monomer. The cofactor is Mg(2+).

The enzyme catalyses adenosine(37) in tRNA + dimethylallyl diphosphate = N(6)-dimethylallyladenosine(37) in tRNA + diphosphate. In terms of biological role, catalyzes the transfer of a dimethylallyl group onto the adenine at position 37 in tRNAs that read codons beginning with uridine, leading to the formation of N6-(dimethylallyl)adenosine (i(6)A). This chain is tRNA dimethylallyltransferase, found in Xanthomonas oryzae pv. oryzae (strain MAFF 311018).